Reading from the N-terminus, the 74-residue chain is ATP synthase subunit c (74 aa).

The next 2 helical transmembrane spans lie at 8–28 (FIGV…VSNI) and 52–72 (IGAG…MLLI).

Belongs to the ATPase C chain family. As to quaternary structure, F-type ATPases have 2 components, F(1) - the catalytic core - and F(0) - the membrane proton channel. F(1) has five subunits: alpha(3), beta(3), gamma(1), delta(1), epsilon(1). F(0) has three main subunits: a(1), b(2) and c(10-14). The alpha and beta chains form an alternating ring which encloses part of the gamma chain. F(1) is attached to F(0) by a central stalk formed by the gamma and epsilon chains, while a peripheral stalk is formed by the delta and b chains.

The protein resides in the cell inner membrane. Its function is as follows. F(1)F(0) ATP synthase produces ATP from ADP in the presence of a proton or sodium gradient. F-type ATPases consist of two structural domains, F(1) containing the extramembraneous catalytic core and F(0) containing the membrane proton channel, linked together by a central stalk and a peripheral stalk. During catalysis, ATP synthesis in the catalytic domain of F(1) is coupled via a rotary mechanism of the central stalk subunits to proton translocation. Functionally, key component of the F(0) channel; it plays a direct role in translocation across the membrane. A homomeric c-ring of between 10-14 subunits forms the central stalk rotor element with the F(1) delta and epsilon subunits. This chain is ATP synthase subunit c, found in Rickettsia canadensis (strain McKiel).